We begin with the raw amino-acid sequence, 471 residues long: Cytolysin (471 aa).

The first 20 residues, 1–20 (MKKMTLFTLSLLATAVQVGA), serve as a signal peptide directing secretion. The Ricin B-type lectin domain maps to 338–465 (AHVTLQSLSN…EANQARWKPT (128 aa)).

This sequence belongs to the HlyA hemolysin family.

Bacterial hemolysins are exotoxins that attack blood cell membranes and cause cell rupture by mechanisms not clearly defined. This chain is Cytolysin (vvhA), found in Vibrio vulnificus (strain CMCP6).